A 765-amino-acid polypeptide reads, in one-letter code: Periplasmic beta-glucosidase (765 aa).

A signal peptide spans M1–A20. The active site involves D287.

This sequence belongs to the glycosyl hydrolase 3 family.

Its subcellular location is the periplasm. The enzyme catalyses Hydrolysis of terminal, non-reducing beta-D-glucosyl residues with release of beta-D-glucose.. This chain is Periplasmic beta-glucosidase (bglX), found in Salmonella typhimurium (strain LT2 / SGSC1412 / ATCC 700720).